A 227-amino-acid polypeptide reads, in one-letter code: Type II restriction enzyme ScaI (227 aa).

Residues 12-35 (EARVGTRTGGPAMRPKTSDSPYFG) form a disordered region.

It carries out the reaction Endonucleolytic cleavage of DNA to give specific double-stranded fragments with terminal 5'-phosphates.. Functionally, a P subtype restriction enzyme that recognizes the double-stranded sequence 5'-AGTACT-3' and cleaves after T-3. The protein is Type II restriction enzyme ScaI of Streptomyces caespitosus.